Consider the following 506-residue polypeptide: UDP-N-acetylmuramoyl-L-alanyl-D-glutamate--2,6-diaminopimelate ligase (506 aa).

Serine 42 provides a ligand contact to UDP-N-acetyl-alpha-D-muramoyl-L-alanyl-D-glutamate. 125-131 (GTSGKTT) is a binding site for ATP. Residues 166–167 (TT), serine 193, and arginine 201 each bind UDP-N-acetyl-alpha-D-muramoyl-L-alanyl-D-glutamate. Lysine 233 carries the N6-carboxylysine modification. Residues arginine 395, 419–422 (DNPR), glycine 475, and glutamate 479 each bind meso-2,6-diaminopimelate. Positions 419-422 (DNPR) match the Meso-diaminopimelate recognition motif motif.

This sequence belongs to the MurCDEF family. MurE subfamily. Mg(2+) is required as a cofactor. Carboxylation is probably crucial for Mg(2+) binding and, consequently, for the gamma-phosphate positioning of ATP.

It localises to the cytoplasm. It catalyses the reaction UDP-N-acetyl-alpha-D-muramoyl-L-alanyl-D-glutamate + meso-2,6-diaminopimelate + ATP = UDP-N-acetyl-alpha-D-muramoyl-L-alanyl-gamma-D-glutamyl-meso-2,6-diaminopimelate + ADP + phosphate + H(+). It functions in the pathway cell wall biogenesis; peptidoglycan biosynthesis. Catalyzes the addition of meso-diaminopimelic acid to the nucleotide precursor UDP-N-acetylmuramoyl-L-alanyl-D-glutamate (UMAG) in the biosynthesis of bacterial cell-wall peptidoglycan. This Streptomyces avermitilis (strain ATCC 31267 / DSM 46492 / JCM 5070 / NBRC 14893 / NCIMB 12804 / NRRL 8165 / MA-4680) protein is UDP-N-acetylmuramoyl-L-alanyl-D-glutamate--2,6-diaminopimelate ligase.